Here is a 274-residue protein sequence, read N- to C-terminus: Ribosomal RNA small subunit methyltransferase A (274 aa).

Residues histidine 15, leucine 17, glycine 42, glutamate 64, aspartate 89, and asparagine 108 each coordinate S-adenosyl-L-methionine.

This sequence belongs to the class I-like SAM-binding methyltransferase superfamily. rRNA adenine N(6)-methyltransferase family. RsmA subfamily.

Its subcellular location is the cytoplasm. The enzyme catalyses adenosine(1518)/adenosine(1519) in 16S rRNA + 4 S-adenosyl-L-methionine = N(6)-dimethyladenosine(1518)/N(6)-dimethyladenosine(1519) in 16S rRNA + 4 S-adenosyl-L-homocysteine + 4 H(+). Specifically dimethylates two adjacent adenosines (A1518 and A1519) in the loop of a conserved hairpin near the 3'-end of 16S rRNA in the 30S particle. May play a critical role in biogenesis of 30S subunits. This chain is Ribosomal RNA small subunit methyltransferase A, found in Prochlorococcus marinus (strain AS9601).